The primary structure comprises 246 residues: Mast cell protease-like protein (246 aa).

The signal sequence occupies residues 1–18 (MQALLFLMALLLPSGAGA). Positions 19 to 20 (EE) are cleaved as a propeptide — activation peptide. The Peptidase S1 domain maps to 21–244 (IIGGVESEPH…HVPWINRVIK (224 aa)). A disulfide bridge connects residues C50 and C66. Catalysis depends on charge relay system residues H65 and D109. Cystine bridges form between C143-C208 and C174-C187. Catalysis depends on S202, which acts as the Charge relay system.

This sequence belongs to the peptidase S1 family. Granzyme subfamily.

The sequence is that of Mast cell protease-like protein (Mcptl) from Mus musculus (Mouse).